The chain runs to 464 residues: Siroheme synthase (464 aa).

The interval 1-203 is precorrin-2 dehydrogenase /sirohydrochlorin ferrochelatase; it reads MEYLPLFHNL…GQGAEAERLL (203 aa). NAD(+) contacts are provided by residues 22–23 and 43–44; these read EI and PE. Phosphoserine is present on S128. The segment at 216–464 is uroporphyrinogen-III C-methyltransferase; it reads GEVYLVGAGP…AWFEGAQSEV (249 aa). P225 contributes to the S-adenosyl-L-methionine binding site. Catalysis depends on D248, which acts as the Proton acceptor. Residue K270 is the Proton donor of the active site. Residues 301–303, I306, 331–332, M383, and G412 contribute to the S-adenosyl-L-methionine site; these read GGD and TA.

In the N-terminal section; belongs to the precorrin-2 dehydrogenase / sirohydrochlorin ferrochelatase family. The protein in the C-terminal section; belongs to the precorrin methyltransferase family.

It carries out the reaction uroporphyrinogen III + 2 S-adenosyl-L-methionine = precorrin-2 + 2 S-adenosyl-L-homocysteine + H(+). It catalyses the reaction precorrin-2 + NAD(+) = sirohydrochlorin + NADH + 2 H(+). The catalysed reaction is siroheme + 2 H(+) = sirohydrochlorin + Fe(2+). It functions in the pathway cofactor biosynthesis; adenosylcobalamin biosynthesis; precorrin-2 from uroporphyrinogen III: step 1/1. The protein operates within cofactor biosynthesis; adenosylcobalamin biosynthesis; sirohydrochlorin from precorrin-2: step 1/1. Its pathway is porphyrin-containing compound metabolism; siroheme biosynthesis; precorrin-2 from uroporphyrinogen III: step 1/1. It participates in porphyrin-containing compound metabolism; siroheme biosynthesis; siroheme from sirohydrochlorin: step 1/1. It functions in the pathway porphyrin-containing compound metabolism; siroheme biosynthesis; sirohydrochlorin from precorrin-2: step 1/1. Functionally, multifunctional enzyme that catalyzes the SAM-dependent methylations of uroporphyrinogen III at position C-2 and C-7 to form precorrin-2 via precorrin-1. Then it catalyzes the NAD-dependent ring dehydrogenation of precorrin-2 to yield sirohydrochlorin. Finally, it catalyzes the ferrochelation of sirohydrochlorin to yield siroheme. This is Siroheme synthase from Pseudomonas fluorescens (strain ATCC BAA-477 / NRRL B-23932 / Pf-5).